The primary structure comprises 791 residues: von Willebrand factor A domain-containing protein 2 (791 aa).

An N-terminal signal peptide occupies residues 1–23 (MPPLLLLPAIYMLLFFRVSPTIS). One can recognise a VWFA 1 domain in the interval 51-221 (DILFLLDGSH…DATNGLLSTL (171 aa)). N146 carries an N-linked (GlcNAc...) asparagine glycan. The EGF-like 1 domain occupies 295–332 (PGPCDSQPCQNGGTCIPEGVDRYHCLCPLAFGGEVNCA). 3 cysteine pairs are disulfide-bonded: C298–C309, C303–C319, and C321–C331. 2 VWFA domains span residues 342-516 (DVLF…QRRL) and 530-704 (DLVF…IEWL). The EGF-like 2 domain maps to 711–747 (PVNLCKPSPCMNEGTCVLKNGSYRCECRGGWEGPHCE). 3 disulfide bridges follow: C715–C726, C720–C735, and C737–C746. The tract at residues 762–791 (HQEPAGLQGPTPSQQAPKHLRIGKALSSAK) is disordered.

As to quaternary structure, forms monomers and multimers. As to expression, detected in uterus, kidney, and skin. Also detected in intestine and lung of adult mice, and in calvaria, femur, brain, heart, intestine, skeletal muscle, and lung of newborn mice.

Its subcellular location is the secreted. In Mus musculus (Mouse), this protein is von Willebrand factor A domain-containing protein 2 (Vwa2).